We begin with the raw amino-acid sequence, 466 residues long: Transcription factor SOX-10 (466 aa).

The segment at 1–67 (MAEEQDLSEV…QQDGEADDDK (67 aa)) is disordered. Residues 23–32 (LSPGSAPSLG) are compositionally biased toward low complexity. Position 24 is a phosphoserine (serine 24). A dimerization (DIM) region spans residues 62–102 (EADDDKFPVCIREAVSQVLSGYDWTLVPMPVRVNGASKSKP). Positions 104–172 (VKRPMNAFMV…QHKKDHPDYK (69 aa)) form a DNA-binding region, HMG box. Residues 134-145 (LSKTLGKLWRLL) carry the Nuclear export signal motif. Composition is skewed to basic and acidic residues over residues 160–173 (LRMQ…DYKY) and 254–271 (ADPK…KPHI). Disordered regions lie at residues 160–199 (LRMQ…EQGG), 212–274 (LDHR…IDFG), 354–375 (AQVK…QPST), and 433–466 (RPLY…LSRP). The tract at residues 228 to 310 (PEHPSGQSHG…LPPNGHPGHV (83 aa)) is transactivation domain (TAM). Positions 353–466 (KAQVKTETAG…QPVYTTLSRP (114 aa)) are transactivation domain (TAC). Polar residues predominate over residues 440–466 (SDPSPSGPQSHSPTHWEQPVYTTLSRP).

Monomer. Interacts with ARMCX3 at the mitochondrial outer membrane surface. Interacts with PAX3. Expressed in fetal brain and in adult brain, heart, small intestine and colon.

Its subcellular location is the cytoplasm. It is found in the nucleus. It localises to the mitochondrion outer membrane. Transcription factor that plays a central role in developing and mature glia. Specifically activates expression of myelin genes, during oligodendrocyte (OL) maturation, such as DUSP15 and MYRF, thereby playing a central role in oligodendrocyte maturation and CNS myelination. Once induced, MYRF cooperates with SOX10 to implement the myelination program. Transcriptional activator of MITF, acting synergistically with PAX3. Transcriptional activator of MBP, via binding to the gene promoter. The sequence is that of Transcription factor SOX-10 (SOX10) from Homo sapiens (Human).